Here is a 354-residue protein sequence, read N- to C-terminus: 3'-5' exonuclease (354 aa).

Residues Met-1 to Lys-120 form a disordered region. 3 stretches are compositionally biased toward basic and acidic residues: residues Lys-13 to Val-23, Thr-36 to Ala-50, and Lys-71 to Pro-91. Ser-104, Ser-110, and Ser-112 each carry phosphoserine. The 169-residue stretch at Val-146 to Arg-314 folds into the 3'-5' exonuclease domain. Residues Asp-163, Glu-165, and Asp-301 each contribute to the Mg(2+) site.

Belongs to the WRNexo family.

It localises to the nucleus. Its function is as follows. Has exonuclease activity on both single-stranded and duplex templates bearing overhangs, but not blunt ended duplex DNA, and cleaves in a 3'-5' direction. Essential for the formation of DNA replication focal centers. Has an important role in maintaining genome stability. This Drosophila erecta (Fruit fly) protein is 3'-5' exonuclease.